A 310-amino-acid chain; its full sequence is Malate dehydrogenase (310 aa).

NAD(+) contacts are provided by residues 7–12 (GAGNVG) and D32. Substrate is bound by residues R81 and R87. Residues N94 and 117-119 (VSN) contribute to the NAD(+) site. Substrate-binding residues include N119 and R150. Residue H174 is the Proton acceptor of the active site.

It belongs to the LDH/MDH superfamily. MDH type 3 family.

The catalysed reaction is (S)-malate + NAD(+) = oxaloacetate + NADH + H(+). In terms of biological role, catalyzes the reversible oxidation of malate to oxaloacetate. This is Malate dehydrogenase from Chlorobium luteolum (strain DSM 273 / BCRC 81028 / 2530) (Pelodictyon luteolum).